The chain runs to 1192 residues: Chromosome partition protein Smc (1192 aa).

31–38 (PNGSGKSN) serves as a coordination point for ATP. 4 coiled-coil regions span residues 164–197 (AGISRFKAKKVEAERRLERVQTNLTRLGDIVDEV), 234–292 (LTLS…RSEL), 333–369 (SAIADLRKTIAALEVAEAELADVQQKKESIAAKRDVE), and 396–464 (EHEA…DAKV). The SMC hinge domain maps to 522-636 (KDLVGIVADC…LVDTLATAIG (115 aa)). Coiled-coil stretches lie at residues 676–736 (RSEL…AKLH), 772–902 (ELAV…EREA), and 986–1030 (GSVN…INAD).

It belongs to the SMC family. Homodimer.

It is found in the cytoplasm. Required for chromosome condensation and partitioning. In Rhodopirellula baltica (strain DSM 10527 / NCIMB 13988 / SH1), this protein is Chromosome partition protein Smc.